Reading from the N-terminus, the 904-residue chain is Structural polyprotein (904 aa).

Disordered stretches follow at residues 1–27 (ADQE…VETE), 35–54 (VETP…SARS), and 320–348 (NNSN…KIGP). Polar residues predominate over residues 39 to 53 (NRINTPMAQDTSSAR). Residues 329–343 (VKEKTKNIPKPKTEN) show a composition bias toward basic and acidic residues.

Belongs to the picornaviruses polyprotein family. In terms of processing, specific enzymatic cleavages in vivo yield mature proteins.

The protein resides in the virion. It is found in the host cytoplasm. In terms of biological role, structural polyprotein: precursor of all the viral capsid proteins. Forms, together with protein VP2 and protein VP3, an icosahedral capsid protecting the viral RNA genome. The icosahedral capsid has a pseudo-T=3 symmetry with a diameter of approximately 300 Angstroms, and is composed of 60 copies of each capsid proteins. Functionally, forms, together with protein VP1 and protein VP3, an icosahedral capsid protecting the viral RNA genome. The icosahedral capsid has a pseudo-T=3 symmetry with a diameter of approximately 300 Angstroms, and is composed of 60 copies of each capsid proteins. Its function is as follows. Forms, together with protein VP1 and protein VP2, an icosahedral capsid protecting the viral RNA genome. The icosahedral capsid has a pseudo-T=3 symmetry with a diameter of approximately 300 Angstroms, and is composed of 60 copies of each capsid proteins. This Apis mellifera (Honeybee) protein is Structural polyprotein.